Consider the following 208-residue polypeptide: Mediator of RNA polymerase II transcription subunit 18 (208 aa).

The protein belongs to the Mediator complex subunit 18 family. Component of the Mediator complex.

It localises to the nucleus. Its function is as follows. Component of the Mediator complex, a coactivator involved in the regulated transcription of nearly all RNA polymerase II-dependent genes. Mediator functions as a bridge to convey information from gene-specific regulatory proteins to the basal RNA polymerase II transcription machinery. Mediator is recruited to promoters by direct interactions with regulatory proteins and serves as a scaffold for the assembly of a functional preinitiation complex with RNA polymerase II and the general transcription factors. This Danio rerio (Zebrafish) protein is Mediator of RNA polymerase II transcription subunit 18 (med18).